The following is a 240-amino-acid chain: EF-hand domain-containing protein D2 (240 aa).

The disordered stretch occupies residues Met-1–Ala-51. Ala-2 carries the post-translational modification N-acetylalanine. Ser-11 is modified (phosphoserine). Positions Ala-32 to Ala-47 are enriched in low complexity. Phosphoserine is present on residues Ser-74 and Ser-76. A Phosphotyrosine modification is found at Tyr-83. EF-hand domains lie at Lys-92–Pro-127 and Gln-128–Gly-163. Residues Asp-105, Asp-109, Glu-116, Asp-141, Asp-143, Asp-145, Lys-147, and Glu-152 each coordinate Ca(2+). Lys-233 is modified (N6-acetyllysine).

In terms of assembly, interacts with CASP9; with inactive form. In terms of tissue distribution, detected in thymus, kidney, spleen, lung, liver and brain. Highest abundance in brain and lowest in kidney and thymus.

The protein localises to the membrane raft. Its function is as follows. May regulate B-cell receptor (BCR)-induced immature and primary B-cell apoptosis. Plays a role as negative regulator of the canonical NF-kappa-B-activating branch. Controls spontaneous apoptosis through the regulation of BCL2L1 abundance. The sequence is that of EF-hand domain-containing protein D2 (Efhd2) from Mus musculus (Mouse).